A 105-amino-acid chain; its full sequence is UPF0145 protein lpp0255 (105 aa).

It belongs to the UPF0145 family.

The polypeptide is UPF0145 protein lpp0255 (Legionella pneumophila (strain Paris)).